We begin with the raw amino-acid sequence, 215 residues long: Peroxiredoxin-5, mitochondrial (215 aa).

The transit peptide at 1-53 (MGLAGVCVLRRSAGYILGGAARQSVAATAAARRRSEGGWASGGVRSFSRAAAA) directs the protein to the mitochondrion. One can recognise a Thioredoxin domain in the interval 57–215 (IKVGDAIPAV…SLAPSIISQL (159 aa)). Residue Lys-76 is modified to N6-acetyllysine. Residue Lys-84 is modified to N6-acetyllysine; alternate. At Lys-84 the chain carries N6-succinyllysine; alternate. Cys-101 (cysteine sulfenic acid (-SOH) intermediate) is an active-site residue. Cys-101 carries S-palmitoyl cysteine lipidation. Cys-101 and Cys-205 are disulfide-bonded. Lys-117 carries the post-translational modification N6-succinyllysine. Ser-172 and Ser-183 each carry phosphoserine. The Microbody targeting signal motif lies at 213-215 (SQL).

It belongs to the peroxiredoxin family. Prx5 subfamily. In terms of assembly, monomer. Post-translationally, S-palmitoylated. Palmitoylation occurs on the active site, inhibiting its reactivity; therefore PRDX5 palmitoylation status determines its antioxidant capacity. In terms of processing, S-palmitoylated. Depalmitoylated by ABHD10.

The protein localises to the mitochondrion. The protein resides in the cytoplasm. Its subcellular location is the peroxisome matrix. The catalysed reaction is a hydroperoxide + [thioredoxin]-dithiol = an alcohol + [thioredoxin]-disulfide + H2O. Its function is as follows. Thiol-specific peroxidase that catalyzes the reduction of hydrogen peroxide and organic hydroperoxides to water and alcohols, respectively. Plays a role in cell protection against oxidative stress by detoxifying peroxides and as sensor of hydrogen peroxide-mediated signaling events. In Chlorocebus aethiops (Green monkey), this protein is Peroxiredoxin-5, mitochondrial (PRDX5).